Here is a 470-residue protein sequence, read N- to C-terminus: Ribulose bisphosphate carboxylase large chain (470 aa).

The substrate site is built by Asn115 and Thr165. Catalysis depends on Lys167, which acts as the Proton acceptor. Lys169 contacts substrate. Mg(2+) contacts are provided by Lys193, Asp195, and Glu196. Lys193 is modified (N6-carboxylysine). His286 functions as the Proton acceptor in the catalytic mechanism. Residues Arg287, His319, and Ser371 each contribute to the substrate site.

Belongs to the RuBisCO large chain family. Type I subfamily. As to quaternary structure, heterohexadecamer of 8 large chains and 8 small chains. It depends on Mg(2+) as a cofactor.

It is found in the carboxysome. It carries out the reaction 2 (2R)-3-phosphoglycerate + 2 H(+) = D-ribulose 1,5-bisphosphate + CO2 + H2O. The catalysed reaction is D-ribulose 1,5-bisphosphate + O2 = 2-phosphoglycolate + (2R)-3-phosphoglycerate + 2 H(+). Functionally, ruBisCO catalyzes two reactions: the carboxylation of D-ribulose 1,5-bisphosphate, the primary event in carbon dioxide fixation, as well as the oxidative fragmentation of the pentose substrate in the photorespiration process. Both reactions occur simultaneously and in competition at the same active site. The sequence is that of Ribulose bisphosphate carboxylase large chain from Prochlorococcus marinus (strain MIT 9303).